Consider the following 194-residue polypeptide: Imidazoleglycerol-phosphate dehydratase (194 aa).

The protein belongs to the imidazoleglycerol-phosphate dehydratase family.

The protein localises to the cytoplasm. The enzyme catalyses D-erythro-1-(imidazol-4-yl)glycerol 3-phosphate = 3-(imidazol-4-yl)-2-oxopropyl phosphate + H2O. It functions in the pathway amino-acid biosynthesis; L-histidine biosynthesis; L-histidine from 5-phospho-alpha-D-ribose 1-diphosphate: step 6/9. The polypeptide is Imidazoleglycerol-phosphate dehydratase (Listeria innocua serovar 6a (strain ATCC BAA-680 / CLIP 11262)).